We begin with the raw amino-acid sequence, 267 residues long: Phosphate import ATP-binding protein PstB 1 (267 aa).

One can recognise an ABC transporter domain in the interval 21–262 (LETKDLHVYY…AALQSTSDYV (242 aa)). An ATP-binding site is contributed by 53-60 (GPSGCGKS).

This sequence belongs to the ABC transporter superfamily. Phosphate importer (TC 3.A.1.7) family. As to quaternary structure, the complex is composed of two ATP-binding proteins (PstB), two transmembrane proteins (PstC and PstA) and a solute-binding protein (PstS).

It localises to the cell membrane. It carries out the reaction phosphate(out) + ATP + H2O = ADP + 2 phosphate(in) + H(+). Part of the ABC transporter complex PstSACB involved in phosphate import. Responsible for energy coupling to the transport system. The chain is Phosphate import ATP-binding protein PstB 1 from Streptococcus thermophilus (strain CNRZ 1066).